The following is a 281-amino-acid chain: MQKILQTDDITDNQVLRKRKRKRTETANSENANSALEKAQRDPYSGNAFLPGESSSDEETPLMELSKEELCNKIESLKEKLRSIRKENSRLRQSLVMLQVLPQAVTQFEELVGMAETLLKSGGAVSTPASTLWRATNNSSPDSFASLCSNSNSTSSSPSSVKAEEEQHPGEKQFTIERWQIARCNKSKPQKFINDLMQVLYTNEYMATHSLTGAKSSTSRDKVVKPAMNQNEVQEIIGVTKQVFPSADDVSIRRMIGQKLNNCTKKPNASKAPNSQDGILK.

Disordered regions lie at residues 15 to 62 (VLRK…ETPL) and 143 to 172 (SFASLCSNSNSTSSSPSSVKAEEEQHPGEK). The stretch at 19–99 (RKRKRTETAN…RLRQSLVMLQ (81 aa)) forms a coiled coil. Over residues 143–160 (SFASLCSNSNSTSSSPSS) the composition is skewed to low complexity. Basic and acidic residues predominate over residues 162-172 (KAEEEQHPGEK). In terms of domain architecture, BEN spans 171–271 (EKQFTIERWQ…NCTKKPNASK (101 aa)).

As to quaternary structure, interacts (via BEN domain) with RBPJ.

The protein resides in the nucleus. Acts as a corepressor of recombining binding protein suppressor hairless (RBPJ) and inhibits Notch signaling in neural stem cells, thereby opposing their self-renewal and promoting neurogenesis. The chain is BEN domain-containing protein 6 (Bend6) from Mus musculus (Mouse).